Consider the following 103-residue polypeptide: Cobalt transport protein CbiN (103 aa).

2 consecutive transmembrane segments (helical) span residues 6 to 26 (VLTN…PFFV) and 68 to 88 (LLFA…LGYL).

This sequence belongs to the CbiN family. In terms of assembly, forms an energy-coupling factor (ECF) transporter complex composed of an ATP-binding protein (A component, CbiO), a transmembrane protein (T component, CbiQ) and 2 possible substrate-capture proteins (S components, CbiM and CbiN) of unknown stoichimetry.

It localises to the cell membrane. The protein operates within cofactor biosynthesis; adenosylcobalamin biosynthesis. Its function is as follows. Part of the energy-coupling factor (ECF) transporter complex CbiMNOQ involved in cobalt import. In Clostridium perfringens (strain 13 / Type A), this protein is Cobalt transport protein CbiN.